Here is a 291-residue protein sequence, read N- to C-terminus: MEMO1 family protein TK1477 (291 aa).

Belongs to the MEMO1 family.

The protein is MEMO1 family protein TK1477 of Thermococcus kodakarensis (strain ATCC BAA-918 / JCM 12380 / KOD1) (Pyrococcus kodakaraensis (strain KOD1)).